The primary structure comprises 345 residues: Transcription initiation factor IIB (345 aa).

The TFIIB-type zinc-finger motif lies at 20 to 53 (IVLTCPECKVYPPKIVERFSEGDVVCALCGLVLS). Zn(2+)-binding residues include C24, C27, C45, and C48. Residues 65–78 (TFSNDDHNGDDPSR) are compositionally biased toward basic and acidic residues. The segment at 65-93 (TFSNDDHNGDDPSRVGEASNPLLDGNNLS) is disordered. Repeat copies occupy residues 136 to 212 (LCDA…IMKN) and 242 to 318 (FCSH…ILYE).

The protein belongs to the TFIIB family. In terms of assembly, associates with TFIID-IIA (DA complex) to form TFIID-IIA-IIB (DAB-complex) which is then recognized by polymerase II.

Its subcellular location is the nucleus. General factor that plays a major role in the activation of eukaryotic genes transcribed by RNA polymerase II. This chain is Transcription initiation factor IIB (SUA7), found in Saccharomyces cerevisiae (strain ATCC 204508 / S288c) (Baker's yeast).